The chain runs to 195 residues: Imidazoleglycerol-phosphate dehydratase (195 aa).

Belongs to the imidazoleglycerol-phosphate dehydratase family.

Its subcellular location is the cytoplasm. It carries out the reaction D-erythro-1-(imidazol-4-yl)glycerol 3-phosphate = 3-(imidazol-4-yl)-2-oxopropyl phosphate + H2O. It participates in amino-acid biosynthesis; L-histidine biosynthesis; L-histidine from 5-phospho-alpha-D-ribose 1-diphosphate: step 6/9. This is Imidazoleglycerol-phosphate dehydratase from Methylorubrum populi (strain ATCC BAA-705 / NCIMB 13946 / BJ001) (Methylobacterium populi).